The following is a 444-amino-acid chain: Transcription activator AFTR-2 (444 aa).

A DNA-binding region (zn(2)-C6 fungal-type) is located at residues 16–43 (CDFCTQSKLRCNKNKPSCRRCTLQQQPC). The interval 49-88 (RRTGRPPKHPRKANDCQEANGQHGDQDPVTSTPGGSYQQQ) is disordered. Over residues 50-59 (RTGRPPKHPR) the composition is skewed to basic residues. The span at 76 to 88 (PVTSTPGGSYQQQ) shows a compositional bias: polar residues.

The protein localises to the nucleus. Transcription factor that regulates the expression of the gene clusters that mediate the biosynthesis of the host-selective toxins (HSTs) AF-toxins responsible for Alternaria black spot of strawberry disease by the strawberry pathotype. On cellular level, AF-toxins affect plasma membrane of susceptible cells and cause a sudden increase in loss of K(+) after a few minutes of toxin treatment. The polypeptide is Transcription activator AFTR-2 (Alternaria alternata (Alternaria rot fungus)).